The sequence spans 377 residues: Nitric oxide reductase FlRd-NAD(+) reductase (377 aa).

This sequence belongs to the FAD-dependent oxidoreductase family. FAD is required as a cofactor.

The protein resides in the cytoplasm. It carries out the reaction 2 reduced [nitric oxide reductase rubredoxin domain] + NAD(+) + H(+) = 2 oxidized [nitric oxide reductase rubredoxin domain] + NADH. It participates in nitrogen metabolism; nitric oxide reduction. Functionally, one of at least two accessory proteins for anaerobic nitric oxide (NO) reductase. Reduces the rubredoxin moiety of NO reductase. The protein is Nitric oxide reductase FlRd-NAD(+) reductase of Salmonella agona (strain SL483).